A 101-amino-acid chain; its full sequence is Small ribosomal subunit protein uS10 (101 aa).

The protein belongs to the universal ribosomal protein uS10 family. Part of the 30S ribosomal subunit.

In terms of biological role, involved in the binding of tRNA to the ribosomes. The chain is Small ribosomal subunit protein uS10 from Rhodococcus erythropolis (strain PR4 / NBRC 100887).